The chain runs to 350 residues: Biotin synthase (350 aa).

Residues 38 to 256 (NYVQVSTLLS…IAVARIMMPE (219 aa)) enclose the Radical SAM core domain. [4Fe-4S] cluster-binding residues include Cys53, Cys57, and Cys60. [2Fe-2S] cluster is bound by residues Cys97, Cys128, Cys188, and Arg260.

Belongs to the radical SAM superfamily. Biotin synthase family. As to quaternary structure, homodimer. [4Fe-4S] cluster is required as a cofactor. It depends on [2Fe-2S] cluster as a cofactor.

It catalyses the reaction (4R,5S)-dethiobiotin + (sulfur carrier)-SH + 2 reduced [2Fe-2S]-[ferredoxin] + 2 S-adenosyl-L-methionine = (sulfur carrier)-H + biotin + 2 5'-deoxyadenosine + 2 L-methionine + 2 oxidized [2Fe-2S]-[ferredoxin]. Its pathway is cofactor biosynthesis; biotin biosynthesis; biotin from 7,8-diaminononanoate: step 2/2. In terms of biological role, catalyzes the conversion of dethiobiotin (DTB) to biotin by the insertion of a sulfur atom into dethiobiotin via a radical-based mechanism. This Aliivibrio salmonicida (strain LFI1238) (Vibrio salmonicida (strain LFI1238)) protein is Biotin synthase.